Consider the following 20-residue polypeptide: Juvenile hormone-binding protein (20 aa).

It is found in the secreted. Prevents juvenile hormone from being hydrolyzed by general esterases by combining with it specifically. This chain is Juvenile hormone-binding protein (JHBP), found in Bombyx mori (Silk moth).